Reading from the N-terminus, the 480-residue chain is Cytochrome b-c1 complex subunit 1, mitochondrial (480 aa).

The transit peptide at 1–34 (MAASAVCRAACSGTQALLRTCRSPALLRLPALRG) directs the protein to the mitochondrion. 2 positions are modified to N6-acetyllysine: Lys111 and Lys138. Position 163 is an N6-acetyllysine; alternate (Lys163). An N6-succinyllysine; alternate modification is found at Lys163. Ser212 is modified (phosphoserine). At Thr214 the chain carries Phosphothreonine.

Belongs to the peptidase M16 family. UQCRC1/QCR1 subfamily. In terms of assembly, component of the ubiquinol-cytochrome c oxidoreductase (cytochrome b-c1 complex, complex III, CIII), a multisubunit enzyme composed of 11 subunits. The complex is composed of 3 respiratory subunits cytochrome b, cytochrome c1 and Rieske protein UQCRFS1, 2 core protein subunits UQCRC1/QCR1 and UQCRC2/QCR2, and 6 low-molecular weight protein subunits UQCRH/QCR6, UQCRB/QCR7, UQCRQ/QCR8, UQCR10/QCR9, UQCR11/QCR10 and subunit 9, the cleavage product of Rieske protein UQCRFS1. The complex exists as an obligatory dimer and forms supercomplexes (SCs) in the inner mitochondrial membrane with NADH-ubiquinone oxidoreductase (complex I, CI) and cytochrome c oxidase (complex IV, CIV), resulting in different assemblies (supercomplex SCI(1)III(2)IV(1) and megacomplex MCI(2)III(2)IV(2)). Interacts with UQCC6. Interacts with STMP1.

The protein resides in the mitochondrion inner membrane. Functionally, component of the ubiquinol-cytochrome c oxidoreductase, a multisubunit transmembrane complex that is part of the mitochondrial electron transport chain which drives oxidative phosphorylation. The respiratory chain contains 3 multisubunit complexes succinate dehydrogenase (complex II, CII), ubiquinol-cytochrome c oxidoreductase (cytochrome b-c1 complex, complex III, CIII) and cytochrome c oxidase (complex IV, CIV), that cooperate to transfer electrons derived from NADH and succinate to molecular oxygen, creating an electrochemical gradient over the inner membrane that drives transmembrane transport and the ATP synthase. The cytochrome b-c1 complex catalyzes electron transfer from ubiquinol to cytochrome c, linking this redox reaction to translocation of protons across the mitochondrial inner membrane, with protons being carried across the membrane as hydrogens on the quinol. In the process called Q cycle, 2 protons are consumed from the matrix, 4 protons are released into the intermembrane space and 2 electrons are passed to cytochrome c. The 2 core subunits UQCRC1/QCR1 and UQCRC2/QCR2 are homologous to the 2 mitochondrial-processing peptidase (MPP) subunits beta-MPP and alpha-MPP respectively, and they seem to have preserved their MPP processing properties. May be involved in the in situ processing of UQCRFS1 into the mature Rieske protein and its mitochondrial targeting sequence (MTS)/subunit 9 when incorporated into complex III. Seems to play an important role in the maintenance of proper mitochondrial function in nigral dopaminergic neurons. This chain is Cytochrome b-c1 complex subunit 1, mitochondrial (Uqcrc1), found in Rattus norvegicus (Rat).